The chain runs to 595 residues: Elongation factor 4 (595 aa).

A tr-type G domain is found at 2-183; sequence KNIRNFCIIA…TIVEKVPAPK (182 aa). GTP contacts are provided by residues 14–19 and 130–133; these read DHGKST and NKID.

The protein belongs to the TRAFAC class translation factor GTPase superfamily. Classic translation factor GTPase family. LepA subfamily.

It localises to the cell inner membrane. The catalysed reaction is GTP + H2O = GDP + phosphate + H(+). In terms of biological role, required for accurate and efficient protein synthesis under certain stress conditions. May act as a fidelity factor of the translation reaction, by catalyzing a one-codon backward translocation of tRNAs on improperly translocated ribosomes. Back-translocation proceeds from a post-translocation (POST) complex to a pre-translocation (PRE) complex, thus giving elongation factor G a second chance to translocate the tRNAs correctly. Binds to ribosomes in a GTP-dependent manner. The chain is Elongation factor 4 from Parabacteroides distasonis (strain ATCC 8503 / DSM 20701 / CIP 104284 / JCM 5825 / NCTC 11152).